The chain runs to 361 residues: 45 kDa calcium-binding protein (361 aa).

The first 35 residues, 1-35 (MVWLVAMTPRQSSLCGLAAHGLWFLGLVLLMDATA), serve as a signal peptide directing secretion. Residue N39 is glycosylated (N-linked (GlcNAc...) asparagine). EF-hand domains follow at residues 97–132 (RSRR…KTAE) and 136–171 (EAVK…SKGH). S98 carries the phosphoserine modification. Ca(2+) is bound by residues D110, N112, D114, R116, E121, D149, D151, D153, H155, and E160. T192 carries the phosphothreonine modification. 4 consecutive EF-hand domains span residues 196–231 (LGNL…HSRG), 232–267 (MLKF…TVEN), 277–312 (WVKD…MNEY), and 313–348 (NALN…FTGS). D212 contributes to the Ca(2+) binding site. T216 is subject to Phosphothreonine. E219, D245, D247, D249, Q251, and E256 together coordinate Ca(2+). Position 264 is a phosphothreonine (T264). Ca(2+)-binding residues include D290, N292, and D294. A Phosphothreonine modification is found at T298. E301, D326, N328, N330, H332, and E337 together coordinate Ca(2+). The segment at 308–361 (PMNEYNALNEAKQMIAIADENQNHHLEPEEILKYSEFFTGSKLMDYARNVHEEF) is necessary for intracellular retention in Golgi apparatus lumen.

It belongs to the CREC family. As to expression, ubiquitous.

The protein resides in the golgi apparatus lumen. Its function is as follows. May regulate calcium-dependent activities in the endoplasmic reticulum lumen or post-ER compartment. The polypeptide is 45 kDa calcium-binding protein (Sdf4) (Mus musculus (Mouse)).